The primary structure comprises 338 residues: Gibberellin 2-beta-dioxygenase 8 (338 aa).

The region spanning Asn-191 to Pro-290 is the Fe2OG dioxygenase domain. Fe cation-binding residues include His-215, Asp-217, and His-271. Arg-281 is an active-site residue. A 2-oxoglutarate-binding site is contributed by Arg-281.

It belongs to the iron/ascorbate-dependent oxidoreductase family. GA2OX subfamily. The cofactor is Fe(2+).

The catalysed reaction is gibberellin A1 + 2-oxoglutarate + O2 = gibberellin A8 + succinate + CO2. Its pathway is plant hormone biosynthesis; gibberellin biosynthesis. Its function is as follows. Catalyzes the 2-beta-hydroxylation of gibberellins (GA) precursors, rendering them unable to be converted to active GAs. Hydroxylates the C20-GA GA12 and GA53, but is not active on C19-GAs, like GA1, GA4, GA9 and GA20. The polypeptide is Gibberellin 2-beta-dioxygenase 8 (GA2OX8) (Arabidopsis thaliana (Mouse-ear cress)).